The sequence spans 449 residues: C4-dicarboxylate transport protein 1 (449 aa).

Helical transmembrane passes span 16-38 (FLQVVIGLVIGVICGVGIPDLAV), 53-71 (MLIALIVFCVVVNGISGAG), 84-106 (VIYFEILTTIALVLGLVVAYSLG), 157-176 (ILQVLLFSVLFGSALNLVGE), 197-219 (GMIVRLAPLGVFGAVAFTTARYG), 229-251 (LVLVFYATCLVFVMAVLGSVLRL), 311-333 (GFSIYLTLAVVFIAHVTGTPLAM), and 358-380 (LVILAATLTAVPAIPVAGLVLVL).

Belongs to the dicarboxylate/amino acid:cation symporter (DAACS) (TC 2.A.23) family.

It localises to the cell inner membrane. Responsible for the transport of dicarboxylates such as succinate, fumarate, and malate from the periplasm across the membrane. The chain is C4-dicarboxylate transport protein 1 (dctA1) from Pseudomonas aeruginosa (strain ATCC 15692 / DSM 22644 / CIP 104116 / JCM 14847 / LMG 12228 / 1C / PRS 101 / PAO1).